Consider the following 1070-residue polypeptide: DNA-directed RNA polymerase subunit beta (1070 aa).

Belongs to the RNA polymerase beta chain family. As to quaternary structure, in plastids the minimal PEP RNA polymerase catalytic core is composed of four subunits: alpha, beta, beta', and beta''. When a (nuclear-encoded) sigma factor is associated with the core the holoenzyme is formed, which can initiate transcription.

It localises to the plastid. The protein resides in the chloroplast. It carries out the reaction RNA(n) + a ribonucleoside 5'-triphosphate = RNA(n+1) + diphosphate. Functionally, DNA-dependent RNA polymerase catalyzes the transcription of DNA into RNA using the four ribonucleoside triphosphates as substrates. The sequence is that of DNA-directed RNA polymerase subunit beta from Buxus microphylla (Littleleaf boxwood).